Consider the following 319-residue polypeptide: Probable deoxyhypusine synthase (319 aa).

Lys-287 (nucleophile) is an active-site residue.

Belongs to the deoxyhypusine synthase family. NAD(+) serves as cofactor.

It catalyses the reaction [eIF5A protein]-L-lysine + spermidine = [eIF5A protein]-deoxyhypusine + propane-1,3-diamine. The protein operates within protein modification; eIF5A hypusination. Catalyzes the NAD-dependent oxidative cleavage of spermidine and the subsequent transfer of the butylamine moiety of spermidine to the epsilon-amino group of a specific lysine residue of the eIF-5A precursor protein to form the intermediate deoxyhypusine residue. This Ignicoccus hospitalis (strain KIN4/I / DSM 18386 / JCM 14125) protein is Probable deoxyhypusine synthase.